Here is a 1015-residue protein sequence, read N- to C-terminus: Frequency clock protein (1015 aa).

Disordered regions lie at residues 1–138 (MQPT…SADD), 183–285 (KRKK…QKVD), 352–383 (DFSP…TFSS), 402–465 (HVAG…DPDR), 544–614 (GRKI…VSAS), 629–668 (SPNE…NRRK), 706–728 (ERPD…GSSI), and 895–1015 (SEDD…SSQG). Over residues 49–68 (SAPPNDSNENSSSPRRASSG) the composition is skewed to low complexity. A compositionally biased stretch (basic and acidic residues) spans 69–80 (ESHETGQSDAKK). Over residues 82–95 (FNQSNQNPTATFDS) the composition is skewed to polar residues. Positions 107–117 (KESDSSNEDKP) are enriched in basic and acidic residues. Low complexity-rich tracts occupy residues 203 to 216 (SPNT…STTK), 228 to 267 (SGSG…SGTS), and 356 to 368 (QQQQ…QQQQ). Positions 369 to 383 (PKSNFITNPGATFSS) are enriched in polar residues. Residues 431–442 (NSSSNGNDSGTN) show a composition bias toward low complexity. Pro residues predominate over residues 443 to 453 (PSPPMPPPPEQ). Residues 454-465 (RPTRPRDLDPDR) are compositionally biased toward basic and acidic residues. Residues 556–570 (TKFSSESSGDLSQRS) show a composition bias toward polar residues. Positions 584–588 (HKRQK) match the Nuclear localization signal motif. Residues 590 to 600 (GHSTGDSGSSG) are compositionally biased toward low complexity. Polar residues predominate over residues 629-643 (SPNEQSSMEDGTLSS). Composition is skewed to acidic residues over residues 895-909 (SEDD…EFNS) and 934-946 (SGDE…EDDI). Positions 976-1003 (GSSRGRSNSASAEAVLRAGGSSAATAGG) are enriched in low complexity.

Belongs to the FRQ family.

Its subcellular location is the nucleus. In terms of biological role, circadian clock component involved in the generation of biological rhythms, in particular in rhythm stability, period length, and temperature compensation. Behaves as a negative element in circadian transcriptional loop. The protein is Frequency clock protein (FRQ) of Trichoderma spinulosum (Hypocrea spinulosa).